The primary structure comprises 475 residues: Rho GTPase-activating protein 15 (475 aa).

Residues 1-22 (MERSTTSDTASEKPNPSHSTGA) are disordered. Residues 80–190 (VVEKEGYLLK…WFHAIKNAID (111 aa)) enclose the PH domain. The region spanning 281 to 470 (SHLHLVCEHE…LMLSEYSKIF (190 aa)) is the Rho-GAP domain.

Its subcellular location is the cytoplasm. The protein localises to the membrane. Functionally, GTPase activator for the Rho-type GTPases by converting them to an inactive GDP-bound state. This Gallus gallus (Chicken) protein is Rho GTPase-activating protein 15 (ARHGAP15).